We begin with the raw amino-acid sequence, 137 residues long: MRILGLDLGKKTIGVAISDPLGFTAQGITTIRRANKEKDMEELRKICDEYKVETIVIGLPKNMNGTIGPSGEIAMEMGKLVEEALNIKVEFWDERLTTVAAHKAMLEADLSRSKRKKIVDKVASTYILQGYLDRISK.

Belongs to the YqgF nuclease family.

It localises to the cytoplasm. Functionally, could be a nuclease involved in processing of the 5'-end of pre-16S rRNA. In Clostridium botulinum (strain Alaska E43 / Type E3), this protein is Putative pre-16S rRNA nuclease.